The sequence spans 2252 residues: RNA1 polyprotein (2252 aa).

The Cytoplasmic segment spans residues 565–1140 (MITTLAQSIF…QGREFIVSNG (576 aa)). The SF3 helicase domain occupies 733–899 (MKDLLELQKR…PGVIFDPDNA (167 aa)). 763-770 (GPSHCGKS) contributes to the ATP binding site. Residues 1141–1161 (GGILMIAAAIILVLVCGWGFW) traverse the membrane as a helical segment. At 1162 to 1187 (KAFVGLFTGSMSLGAALAGCQEAEVK) the chain is on the lumenal side. In terms of domain architecture, Peptidase C3 spans 1213–1422 (SYARSQAGNG…WACILPNPHL (210 aa)). Active-site for picornain 3C-like protease activity residues include His1256, Glu1294, and Cys1386. A RdRp catalytic domain is found at 1697-1825 (NEAINCDYSG…SVSPAVASWF (129 aa)).

Belongs to the nepoviruses RNA1 polyprotein family. Post-translationally, specific enzymatic cleavages by picornain 3C-like protease in vivo yield mature proteins. Picornain 3C-like protease is autocatalytically processed. VPg is uridylylated by the polymerase and is covalently linked to the 5'-end of genomic RNA. This uridylylated form acts as a nucleotide-peptide primer for the polymerase.

It localises to the host endoplasmic reticulum lumen. The protein resides in the host endoplasmic reticulum membrane. The catalysed reaction is RNA(n) + a ribonucleoside 5'-triphosphate = RNA(n+1) + diphosphate. Functionally, picornain 3C-like protease is a thiol protease that cleaves the P1 and P2 polyproteins. This chain is RNA1 polyprotein, found in Apium graveolens (Celery).